We begin with the raw amino-acid sequence, 509 residues long: Maturase K (509 aa).

This sequence belongs to the intron maturase 2 family. MatK subfamily.

It is found in the plastid. It localises to the chloroplast. Its function is as follows. Usually encoded in the trnK tRNA gene intron. Probably assists in splicing its own and other chloroplast group II introns. This Vachellia farnesiana (Sweet acacia) protein is Maturase K.